Reading from the N-terminus, the 307-residue chain is Methionyl-tRNA formyltransferase (307 aa).

Position 110 to 113 (110 to 113 (SLLP)) interacts with (6S)-5,6,7,8-tetrahydrofolate.

Belongs to the Fmt family.

The enzyme catalyses L-methionyl-tRNA(fMet) + (6R)-10-formyltetrahydrofolate = N-formyl-L-methionyl-tRNA(fMet) + (6S)-5,6,7,8-tetrahydrofolate + H(+). Its function is as follows. Attaches a formyl group to the free amino group of methionyl-tRNA(fMet). The formyl group appears to play a dual role in the initiator identity of N-formylmethionyl-tRNA by promoting its recognition by IF2 and preventing the misappropriation of this tRNA by the elongation apparatus. The sequence is that of Methionyl-tRNA formyltransferase from Chromobacterium violaceum (strain ATCC 12472 / DSM 30191 / JCM 1249 / CCUG 213 / NBRC 12614 / NCIMB 9131 / NCTC 9757 / MK).